The sequence spans 337 residues: Equatorin (337 aa).

The N-terminal stretch at 1–20 (MDFILLIILSGVFLPDIISL) is a signal peptide. Residues 21 to 183 (QPIVGQEPGV…LSELEEIKLK (163 aa)) are Lumenal-facing. Residues 110 to 130 (SKPTASGEEEKPSESSRKTST) are disordered. The span at 117–126 (EEEKPSESSR) shows a compositional bias: basic and acidic residues. The N-linked (GlcNAc...) asparagine glycan is linked to Asn-145. Residues 184 to 204 (LMLGISLMTLVLLIPLLIFCF) form a helical membrane-spanning segment. The Cytoplasmic portion of the chain corresponds to 205-337 (ATLYKLRHLR…LLNKEGSPSN (133 aa)). Residues 259–283 (SSEMRRSRTRRSKSKPMDFSAGSNQ) are disordered. The residue at position 336 (Ser-336) is a Phosphoserine.

In terms of assembly, interacts with SNAP25. Post-translationally, highly N- and O-glycosylated; contains sialic acid. MN9 epitope is O-glycosylated. In terms of tissue distribution, sperm specific, including germ cells (at protein level).

The protein resides in the cytoplasmic vesicle. It localises to the secretory vesicle. It is found in the acrosome membrane. The protein localises to the acrosome inner membrane. Its subcellular location is the acrosome outer membrane. The protein resides in the nucleus. It localises to the cytoplasm. Acrosomal membrane-anchored protein involved in the process of fertilization and in acrosome biogenesis. This is Equatorin (Eqtn) from Mus musculus (Mouse).